The following is a 25-amino-acid chain: Antimicrobial peptide 2 (25 aa).

Expressed by the skin glands.

It is found in the secreted. Has very strong antibacterial activity against Gram-positive bacterium S.aureus and very weak activity against Gram-negative bacterium E.coli. The sequence is that of Antimicrobial peptide 2 from Xenopus tropicalis (Western clawed frog).